Reading from the N-terminus, the 472-residue chain is Methanethiol oxidase (472 aa).

Ala2 bears the N-acetylalanine mark. Phosphoserine occurs at positions 111 and 467.

This sequence belongs to the selenium-binding protein family. Interacts with USP33. Post-translationally, the N-terminus is blocked. As to expression, present in liver and colon (at protein level).

Its subcellular location is the nucleus. The protein localises to the cytoplasm. It is found in the cytosol. The protein resides in the membrane. The catalysed reaction is methanethiol + O2 + H2O = hydrogen sulfide + formaldehyde + H2O2 + H(+). Its pathway is organosulfur degradation. Catalyzes the oxidation of methanethiol, an organosulfur compound known to be produced in substantial amounts by gut bacteria. Selenium-binding protein which may be involved in the sensing of reactive xenobiotics in the cytoplasm. May be involved in intra-Golgi protein transport. The protein is Methanethiol oxidase (Selenbp1) of Rattus norvegicus (Rat).